A 431-amino-acid polypeptide reads, in one-letter code: Tol-Pal system protein TolB (431 aa).

Positions 1 to 26 (MSLMTKLGFRALVASCLIAAGGAANA) are cleaved as a signal peptide. The tract at residues 411-431 (PQILSVQGGSVREPSWGPFMQ) is disordered.

It belongs to the TolB family. As to quaternary structure, the Tol-Pal system is composed of five core proteins: the inner membrane proteins TolA, TolQ and TolR, the periplasmic protein TolB and the outer membrane protein Pal. They form a network linking the inner and outer membranes and the peptidoglycan layer.

The protein resides in the periplasm. In terms of biological role, part of the Tol-Pal system, which plays a role in outer membrane invagination during cell division and is important for maintaining outer membrane integrity. The polypeptide is Tol-Pal system protein TolB (Burkholderia vietnamiensis (strain G4 / LMG 22486) (Burkholderia cepacia (strain R1808))).